The sequence spans 483 residues: MLPRLAKSSLIQQVRGVSAIANAEPSGPSISTSIPGPKSKALKQEMDKVHQTTSVRFHVDYEKSFGNYVVDADGNALLDVYTQISSLPLGYNHPDLVKVASQPHLITSLVSRPALGSFPRTDFADGISHALTSIAPKGLKAVQTMLCGTSANENAIKTAFIWYQAQRRGGLGPDALHLESCMNQQKPGTPNLSVMGFEGAFHGRSLCMLSVTRSKPIHKVDIPAFDWPIAKFPRYKYPLDQNVAYNKKQDQECLADVEAKISEWKRRDNDVAAIIVEPIQAEGGDHYGSPAFFQGLRDITSKHGIVFIVDEVQTGGGATGDIWAHDHWNLSSPPDMVTFSKKLLTGGYFYGEHLRVKEAYRIYNTWMGDPTKLLLLEKAVEVIKRDGLIEQSREVGAEFQKRLGELQASSGGKLDQARGRGTFAAVDFPSGSLRDKFVDLAISNGLHCGGCGDRSLRFRPSLVYTKKHLDLTFDLLDKTLKGL.

148 to 149 provides a ligand contact to pyridoxal 5'-phosphate; the sequence is GT. Position 204 (Arg204) interacts with substrate. The residue at position 341 (Lys341) is an N6-(pyridoxal phosphate)lysine. A pyridoxal 5'-phosphate-binding site is contributed by Thr365.

Belongs to the class-III pyridoxal-phosphate-dependent aminotransferase family. In terms of assembly, homodimer. The cofactor is pyridoxal 5'-phosphate.

It is found in the mitochondrion matrix. The enzyme catalyses 4-aminobutanoate + 2-oxoglutarate = succinate semialdehyde + L-glutamate. It carries out the reaction (S)-3-amino-2-methylpropanoate + 2-oxoglutarate = 2-methyl-3-oxopropanoate + L-glutamate. The protein is Probable 4-aminobutyrate aminotransferase, mitochondrial (gta-1) of Caenorhabditis elegans.